The following is a 413-amino-acid chain: Glucose-1-phosphatase (413 aa).

Residues 1 to 22 (MKKSLLAVAVAGAVLLSSAVQA) form the signal peptide. R39 serves as a coordination point for substrate. The active-site Nucleophile is H40. Substrate-binding residues include R43, R116, and E218. Catalysis depends on D312, which acts as the Proton donor.

The protein belongs to the histidine acid phosphatase family. In terms of assembly, homodimer.

The protein localises to the periplasm. It catalyses the reaction alpha-D-glucose 1-phosphate + H2O = D-glucose + phosphate. The sequence is that of Glucose-1-phosphatase (agp) from Salmonella typhimurium (strain LT2 / SGSC1412 / ATCC 700720).